Consider the following 308-residue polypeptide: UPF0282 protein M164_2122 (308 aa).

The protein belongs to the UPF0282 family.

This chain is UPF0282 protein M164_2122, found in Saccharolobus islandicus (strain M.16.4 / Kamchatka #3) (Sulfolobus islandicus).